The sequence spans 783 residues: Cilia- and flagella-associated protein 91 (783 aa).

Positions 748–760 (EDFELEEEAESLD) are enriched in acidic residues. Residues 748 to 783 (EDFELEEEAESLDSEVPTVSVSKTSTIKPTQDEGEG) form a disordered region. Residues 764-776 (PTVSVSKTSTIKP) are compositionally biased toward polar residues.

Belongs to the CFAP91 family. As to quaternary structure, part of a complex containing MYCBP, AKAP1 and PRKAR2B. Interacts with MYCBP and AKAP1. Interacts with CFAP61. Phosphorylated by PKA. As to expression, expressed in the testis, in cells involved in spermatogenesis.

The protein localises to the cytoplasm. It localises to the mitochondrion. Its subcellular location is the cytoskeleton. The protein resides in the cilium axoneme. Involved in sperm flagellum axonemal organization and function. May regulate cilium motility through its role in the assembly of the axonemal radial spokes. This Mus musculus (Mouse) protein is Cilia- and flagella-associated protein 91.